A 442-amino-acid chain; its full sequence is 3-ketoacyl-CoA thiolase (442 aa).

Cys-105 functions as the Acyl-thioester intermediate in the catalytic mechanism. Catalysis depends on proton acceptor residues His-398 and Cys-428.

It belongs to the thiolase-like superfamily. Thiolase family. In terms of assembly, heterotetramer of two alpha chains (FadJ) and two beta chains (FadI).

Its subcellular location is the cytoplasm. It catalyses the reaction an acyl-CoA + acetyl-CoA = a 3-oxoacyl-CoA + CoA. The protein operates within lipid metabolism; fatty acid beta-oxidation. In terms of biological role, catalyzes the final step of fatty acid oxidation in which acetyl-CoA is released and the CoA ester of a fatty acid two carbons shorter is formed. The chain is 3-ketoacyl-CoA thiolase from Aliivibrio fischeri (strain MJ11) (Vibrio fischeri).